A 748-amino-acid chain; its full sequence is Glucans biosynthesis glucosyltransferase H (748 aa).

Helical transmembrane passes span 85-107 (LIVR…GYGM), 127-149 (FLVL…FVLL), 443-465 (GIGS…LISL), 494-516 (AWVF…LVLI), 529-551 (GRVL…CMMI), 587-606 (LAGP…SVSL), and 608-630 (LLLW…IMTS).

Belongs to the glycosyltransferase 2 family. OpgH subfamily.

It is found in the cell inner membrane. The protein operates within glycan metabolism; osmoregulated periplasmic glucan (OPG) biosynthesis. In terms of biological role, involved in the biosynthesis of osmoregulated periplasmic glucans (OPGs). This chain is Glucans biosynthesis glucosyltransferase H, found in Bradyrhizobium diazoefficiens (strain JCM 10833 / BCRC 13528 / IAM 13628 / NBRC 14792 / USDA 110).